Consider the following 314-residue polypeptide: uncharacterized protein (314 aa).

Residues 1–71 form a disordered region; the sequence is MAGNSQRRGA…QRAGRKADET (71 aa). Residues G266, I286, and L295 each contribute to the S-adenosyl-L-methionine site.

This sequence belongs to the class IV-like SAM-binding methyltransferase superfamily. RNA methyltransferase TrmH family.

This is an uncharacterized protein from Mycolicibacterium smegmatis (strain ATCC 700084 / mc(2)155) (Mycobacterium smegmatis).